A 154-amino-acid polypeptide reads, in one-letter code: Small ribosomal subunit protein uS15 (154 aa).

The tract at residues M1–W23 is disordered.

This sequence belongs to the universal ribosomal protein uS15 family. Part of the 30S ribosomal subunit.

The chain is Small ribosomal subunit protein uS15 from Staphylothermus marinus (strain ATCC 43588 / DSM 3639 / JCM 9404 / F1).